The primary structure comprises 336 residues: DNA polymerase III subunit delta' (336 aa).

In terms of assembly, DNA polymerase III contains a core (composed of alpha, epsilon and theta chains) that associates with a tau subunit. This core dimerizes to form the POLIII' complex. PolIII' associates with the gamma complex (composed of gamma, delta, delta', psi and chi chains) and with the beta chain to form the complete DNA polymerase III complex.

It catalyses the reaction DNA(n) + a 2'-deoxyribonucleoside 5'-triphosphate = DNA(n+1) + diphosphate. In terms of biological role, DNA polymerase III is a complex, multichain enzyme responsible for most of the replicative synthesis in bacteria. This DNA polymerase also exhibits 3' to 5' exonuclease activity. This chain is DNA polymerase III subunit delta' (holB), found in Buchnera aphidicola subsp. Baizongia pistaciae (strain Bp).